Consider the following 359-residue polypeptide: Peptide chain release factor 1 (359 aa).

An N5-methylglutamine modification is found at glutamine 235. Positions 287-312 are disordered; it reads AQEASAMRSAQVGSGDRSERIRTYNF.

It belongs to the prokaryotic/mitochondrial release factor family. Methylated by PrmC. Methylation increases the termination efficiency of RF1.

Its subcellular location is the cytoplasm. Its function is as follows. Peptide chain release factor 1 directs the termination of translation in response to the peptide chain termination codons UAG and UAA. This is Peptide chain release factor 1 from Chlamydia trachomatis serovar L2 (strain ATCC VR-902B / DSM 19102 / 434/Bu).